A 258-amino-acid chain; its full sequence is Ribosome maturation factor RimP (258 aa).

Disordered stretches follow at residues 48-88 (PQRP…PTSA) and 212-258 (IFKK…AEND). A compositionally biased stretch (basic residues) spans 215-224 (KPQKPGKKPG).

This sequence belongs to the RimP family.

It is found in the cytoplasm. In terms of biological role, required for maturation of 30S ribosomal subunits. The sequence is that of Ribosome maturation factor RimP from Desulfovibrio desulfuricans (strain ATCC 27774 / DSM 6949 / MB).